Reading from the N-terminus, the 548-residue chain is MVNIRVQKAPESPRTMEVGEIDTRAPFQSVKAAVSLFGEVAVSKQRSTPRRSRLSSESVCDKETQLMLVHKEFMKIKQKLDNAESTRSRALDDLSKAKKTMEDLSNKLETVNKSKQSAIDTKETVQQREEQLEHDKCHGSPPHHHELDVAREQYISTTVELDAAKQQLNKIRQSFDSAMDFKATALNQAAEAQRALQVNSAKVNELSKEISDMKDAIHQLKLAAAQNLQEHANIVKEKDDLRECYRTAVEEAEKKLLVLRKEYEPELSRTLEAKLLETTSEIEVLREEMKKAHESEMNTVKIITNELNEATMRLQEAADDECSLRSLVNSLRMELEDLRREREELQQKEAERLEIEETKKLEALKQESLKLEQMKTEAIEARNEAANMNRKIESLKKETEAAMIAAEEAEKRLELVIREVEEAKSAEEKVREEMKMISQKQESKKQDEESSGSKIKITIQEFESLKRGAGETEAAIEKKLATIAAELEEINKRRAEADNKLEANLKAIEEMKQATELAQKSAESAEAAKRMVESELQRWRQQENVQLA.

A coiled-coil region spans residues 71–544 (KEFMKIKQKL…ELQRWRQQEN (474 aa)). Positions 430-448 (VREEMKMISQKQESKKQDE) are enriched in basic and acidic residues. The disordered stretch occupies residues 430 to 455 (VREEMKMISQKQESKKQDEESSGSKI).

The protein belongs to the WEB family.

The polypeptide is WEB family protein At1g12150 (Arabidopsis thaliana (Mouse-ear cress)).